The primary structure comprises 166 residues: Large ribosomal subunit protein uL10 (166 aa).

It belongs to the universal ribosomal protein uL10 family. Part of the ribosomal stalk of the 50S ribosomal subunit. The N-terminus interacts with L11 and the large rRNA to form the base of the stalk. The C-terminus forms an elongated spine to which L12 dimers bind in a sequential fashion forming a multimeric L10(L12)X complex.

Its function is as follows. Forms part of the ribosomal stalk, playing a central role in the interaction of the ribosome with GTP-bound translation factors. The sequence is that of Large ribosomal subunit protein uL10 from Bacillus cereus (strain ATCC 14579 / DSM 31 / CCUG 7414 / JCM 2152 / NBRC 15305 / NCIMB 9373 / NCTC 2599 / NRRL B-3711).